The chain runs to 126 residues: Small ribosomal subunit protein bS6 (126 aa).

The tract at residues 103–126 (LKAKDERKAPEALVEEVEAEDADE) is disordered. Residues 115 to 126 (LVEEVEAEDADE) show a composition bias toward acidic residues.

The protein belongs to the bacterial ribosomal protein bS6 family.

In terms of biological role, binds together with bS18 to 16S ribosomal RNA. This chain is Small ribosomal subunit protein bS6, found in Glaesserella parasuis serovar 5 (strain SH0165) (Haemophilus parasuis).